Reading from the N-terminus, the 781-residue chain is DNA polymerase (781 aa).

This sequence belongs to the DNA polymerase type-B family.

The catalysed reaction is DNA(n) + a 2'-deoxyribonucleoside 5'-triphosphate = DNA(n+1) + diphosphate. The sequence is that of DNA polymerase (pol) from Archaeoglobus fulgidus (strain ATCC 49558 / DSM 4304 / JCM 9628 / NBRC 100126 / VC-16).